Consider the following 33-residue polypeptide: Rugosin-A (33 aa).

A disulfide bridge links cysteine 27 with cysteine 33.

This sequence belongs to the frog skin active peptide (FSAP) family. Brevinin subfamily. In terms of tissue distribution, expressed by the skin glands.

It is found in the secreted. Functionally, has antibacterial activity against Gram-positive bacteria. This Glandirana rugosa (Japanese wrinkled frog) protein is Rugosin-A.